Reading from the N-terminus, the 314-residue chain is Ecto-ADP-ribosyltransferase 4 (314 aa).

The N-terminal stretch at Met-1–Gly-46 is a signal peptide. 2 cysteine pairs are disulfide-bonded: Cys-69-Cys-280 and Cys-182-Cys-231. In terms of domain architecture, TR mART core spans Lys-91–Ser-276. The N-linked (GlcNAc...) asparagine glycan is linked to Asn-114. Tyr-126 contacts NAD(+). An N-linked (GlcNAc...) asparagine glycan is attached at Asn-178. Gln-206 is an NAD(+) binding site. Asn-222 is a glycosylation site (N-linked (GlcNAc...) asparagine). Ser-240 serves as a coordination point for NAD(+). Residues Asn-257 and Asn-274 are each glycosylated (N-linked (GlcNAc...) asparagine). A lipid anchor (GPI-anchor amidated alanine) is attached at Ala-285. Positions Ser-286–Val-314 are cleaved as a propeptide — removed in mature form.

This sequence belongs to the Arg-specific ADP-ribosyltransferase family.

The protein localises to the cell membrane. The catalysed reaction is L-arginyl-[protein] + NAD(+) = N(omega)-(ADP-D-ribosyl)-L-arginyl-[protein] + nicotinamide + H(+). The sequence is that of Ecto-ADP-ribosyltransferase 4 (ART4) from Pan troglodytes (Chimpanzee).